A 209-amino-acid polypeptide reads, in one-letter code: Ribosomal RNA small subunit methyltransferase G (209 aa).

Positions 74, 79, and 139 each coordinate S-adenosyl-L-methionine.

Belongs to the methyltransferase superfamily. RNA methyltransferase RsmG family.

The protein resides in the cytoplasm. The catalysed reaction is guanosine(527) in 16S rRNA + S-adenosyl-L-methionine = N(7)-methylguanosine(527) in 16S rRNA + S-adenosyl-L-homocysteine. In terms of biological role, specifically methylates the N7 position of guanine in position 527 of 16S rRNA. The protein is Ribosomal RNA small subunit methyltransferase G of Halorhodospira halophila (strain DSM 244 / SL1) (Ectothiorhodospira halophila (strain DSM 244 / SL1)).